Reading from the N-terminus, the 334-residue chain is ABC transporter L-arabinose-binding periplasmic protein (334 aa).

A signal peptide spans 1 to 30 (MNRTIRRHTLRALLAALCIAPLGMQGAARA).

This sequence belongs to the bacterial solute-binding protein 2 family. As to quaternary structure, the complex is composed of two ATP-binding proteins (AraG), two transmembrane proteins (AraH) and a solute-binding protein (AraF).

Its subcellular location is the periplasm. Part of the ABC transporter complex AraFGH involved in L-arabinose import. Binds with high affinity to L-arabinose. This chain is ABC transporter L-arabinose-binding periplasmic protein (araF), found in Azospirillum brasilense.